The chain runs to 147 residues: Large ribosomal subunit protein uL15 (147 aa).

The interval 1-57 is disordered; it reads MKLHELKSAPKSRNHKAKVVGRGHGSGLGKTSGRGQKGQKARKSGRTRPGFEGGQTP. Residues 10–21 are compositionally biased toward basic residues; the sequence is PKSRNHKAKVVG. Gly residues predominate over residues 22 to 36; that stretch reads RGHGSGLGKTSGRGQ. Residues 37–46 are compositionally biased toward basic residues; sequence KGQKARKSGR.

Belongs to the universal ribosomal protein uL15 family. Part of the 50S ribosomal subunit.

Binds to the 23S rRNA. The polypeptide is Large ribosomal subunit protein uL15 (Mycoplasmoides gallisepticum (strain R(low / passage 15 / clone 2)) (Mycoplasma gallisepticum)).